A 159-amino-acid chain; its full sequence is Endoribonuclease YbeY (159 aa).

Zn(2+)-binding residues include His117, His121, and His127.

Belongs to the endoribonuclease YbeY family. Zn(2+) serves as cofactor.

The protein localises to the cytoplasm. Single strand-specific metallo-endoribonuclease involved in late-stage 70S ribosome quality control and in maturation of the 3' terminus of the 16S rRNA. The polypeptide is Endoribonuclease YbeY (Azorhizobium caulinodans (strain ATCC 43989 / DSM 5975 / JCM 20966 / LMG 6465 / NBRC 14845 / NCIMB 13405 / ORS 571)).